The following is a 321-amino-acid chain: NADH-quinone oxidoreductase subunit H (321 aa).

8 consecutive transmembrane segments (helical) span residues 9-29, 78-98, 111-131, 156-176, 183-203, 234-254, 262-282, and 296-316; these read LLAI…GAYM, IIFT…FAIM, IGIL…LLGG, FLGL…ISTI, IWNI…GLAI, FFIG…TLFF, LPPY…FILI, and ILGW…TAIV.

This sequence belongs to the complex I subunit 1 family. As to quaternary structure, NDH-1 is composed of 14 different subunits. Subunits NuoA, H, J, K, L, M, N constitute the membrane sector of the complex.

It is found in the cell membrane. The catalysed reaction is a quinone + NADH + 5 H(+)(in) = a quinol + NAD(+) + 4 H(+)(out). NDH-1 shuttles electrons from NADH, via FMN and iron-sulfur (Fe-S) centers, to quinones in the respiratory chain. The immediate electron acceptor for the enzyme in this species is believed to be ubiquinone. Couples the redox reaction to proton translocation (for every two electrons transferred, four hydrogen ions are translocated across the cytoplasmic membrane), and thus conserves the redox energy in a proton gradient. This subunit may bind ubiquinone. This is NADH-quinone oxidoreductase subunit H from Baumannia cicadellinicola subsp. Homalodisca coagulata.